A 1344-amino-acid polypeptide reads, in one-letter code: Regulatory-associated protein of TOR 1 (1344 aa).

Over residues 28–44 the composition is skewed to basic and acidic residues; that stretch reads CVSSHDDGDSRRKDSEA. 2 disordered regions span residues 28–56 and 771–818; these read CVSS…GTTE and ASTD…DSVS. Residues 785-816 are compositionally biased toward low complexity; that stretch reads SSSPLGSSGLMQGSPLSDDSSLHSDSGMMHDS. WD repeat units follow at residues 1025–1064, 1070–1111, 1125–1164, 1168–1208, 1214–1255, 1259–1298, and 1307–1344; these read RFET…LLNG, FPDK…GKQK, GARD…LVRS, ESEC…PLVC, QKVE…DTYL, AHRG…LGII, and QKIG…SQAR.

This sequence belongs to the WD repeat RAPTOR family. In terms of assembly, interacts with TOR, ATPK1 and ML1. Interacts with KIN10. Post-translationally, phosphorylated by KIN10. In terms of tissue distribution, expressed in roots, leaves, flowers and seeds.

The protein localises to the cytoplasm. Probable component of the plant TOR kinase pathway that recruits substrates for TOR. Modulates plant cell growth and regulates the activity of ATPK1 kinase in response to osmotic stress. This Arabidopsis thaliana (Mouse-ear cress) protein is Regulatory-associated protein of TOR 1 (RAPTOR1).